The sequence spans 389 residues: Phosphatidylglycerol--prolipoprotein diacylglyceryl transferase (389 aa).

4 helical membrane-spanning segments follow: residues 28–48, 58–78, 98–118, and 148–168; these read IIVAIGIAFGILMFVLKLIYF, FFIFIAVLTMVLGARAWYFLI, LAIQGGVLLTTLAGIIYFNVF, and ISVFVMLDLIAPCVLIGQAIG. Residue Arg-169 coordinates a 1,2-diacyl-sn-glycero-3-phospho-(1'-sn-glycerol). Helical transmembrane passes span 220-240, 281-301, and 309-329; these read IPLFLIESFFNTIFFVFIYFV, IVFSALLILVGIVGIIYCQTL, and FWTYFFLYGWYKVAAFFTTLF.

It belongs to the Lgt family.

It localises to the cell membrane. It carries out the reaction L-cysteinyl-[prolipoprotein] + a 1,2-diacyl-sn-glycero-3-phospho-(1'-sn-glycerol) = an S-1,2-diacyl-sn-glyceryl-L-cysteinyl-[prolipoprotein] + sn-glycerol 1-phosphate + H(+). It participates in protein modification; lipoprotein biosynthesis (diacylglyceryl transfer). In terms of biological role, catalyzes the transfer of the diacylglyceryl group from phosphatidylglycerol to the sulfhydryl group of the N-terminal cysteine of a prolipoprotein, the first step in the formation of mature lipoproteins. The chain is Phosphatidylglycerol--prolipoprotein diacylglyceryl transferase from Mycoplasma pneumoniae (strain ATCC 29342 / M129 / Subtype 1) (Mycoplasmoides pneumoniae).